Consider the following 446-residue polypeptide: Mitochondrial ribonuclease P protein 1 homolog (446 aa).

The N-terminal 24 residues, methionine 1–glutamine 24, are a transit peptide targeting the mitochondrion. Residues proline 41–glutamate 67 are disordered. Serine 50 and serine 57 each carry phosphoserine. Residue threonine 60 is modified to Phosphothreonine. Serine 62 carries the post-translational modification Phosphoserine. Residues leucine 119–isoleucine 158 are a coiled coil. Residues glutamine 179–glutamine 373 form the SAM-dependent MTase TRM10-type domain.

Belongs to the class IV-like SAM-binding methyltransferase superfamily. TRM10 family. As to quaternary structure, component of mitochondrial ribonuclease P, a complex composed of rswl/MRPP1, scu/MRPP2 and mldr/MRPP3.

Its subcellular location is the mitochondrion. Functionally, mitochondrial tRNA N1-methyltransferase involved in mitochondrial tRNA maturation. Component of mitochondrial ribonuclease P, a complex composed of rswl/MRPP1, scu/MRPP2 and mldr/MRPP3., which cleaves tRNA molecules in their 5'-ends. Essential for the structural and functional integrity of mitochondria. Function is essential for pupal development. The chain is Mitochondrial ribonuclease P protein 1 homolog from Drosophila melanogaster (Fruit fly).